The sequence spans 69 residues: Large ribosomal subunit protein uL29 (69 aa).

Belongs to the universal ribosomal protein uL29 family.

This chain is Large ribosomal subunit protein uL29, found in Rhodopseudomonas palustris (strain BisB5).